The following is a 271-amino-acid chain: Interleukin-1 alpha (271 aa).

The propeptide occupies 1–112 (MAKVPDMFED…DSEEEIIKPR (112 aa)). Residue Lys-82 is modified to N6-acetyllysine. N6-myristoyl lysine attachment occurs at residues Lys-82 and Lys-83. A nuclear localization signal (NLS) region spans residues 82-86 (KKRRL). Ser-87 carries the post-translational modification Phosphoserine. Residues Asn-102 and Asn-141 are each glycosylated (N-linked (GlcNAc...) asparagine).

It belongs to the IL-1 family. Monomer. Interacts with TMED10; the interaction mediates the translocation from the cytoplasm into the ERGIC (endoplasmic reticulum-Golgi intermediate compartment) and thereby secretion. Interacts with IL1R1. Interacts with S100A13; this interaction is the first step in the export of IL1A, followed by direct translocation of this complex across the plasma membrane. Post-translationally, acetylated within its nuclear localization sequence, which impacts subcellular localization. Proteolytic processed by CAPN1 in a calcium-dependent manner. Cleavage from 31 kDa precursor to 18 kDa biologically active molecules. In terms of processing, phosphorylated. Phosphorylation greatly enhances susceptibility to digestion and promotes the conversion of pre-IL1A alpha to the biologically active IL1A.

It localises to the nucleus. The protein localises to the cytoplasm. The protein resides in the secreted. Cytokine constitutively present intracellularly in nearly all resting non-hematopoietic cells that plays an important role in inflammation and bridges the innate and adaptive immune systems. After binding to its receptor IL1R1 together with its accessory protein IL1RAP, forms the high affinity interleukin-1 receptor complex. Signaling involves the recruitment of adapter molecules such as MYD88, IRAK1 or IRAK4. In turn, mediates the activation of NF-kappa-B and the three MAPK pathways p38, p42/p44 and JNK pathways. Within the cell, acts as an alarmin and cell death results in its liberation in the extracellular space after disruption of the cell membrane to induce inflammation and alert the host to injury or damage. In addition to its role as a danger signal, which occurs when the cytokine is passively released by cell necrosis, directly senses DNA damage and acts as a signal for genotoxic stress without loss of cell integrity. This is Interleukin-1 alpha (IL1A) from Homo sapiens (Human).